A 118-amino-acid chain; its full sequence is MIKGVGIDSIEVERVKKIVAKGDSFAEKVLTPKEFAQYQKMKGKRKVEYLGGRFSLKESFSKAMGTGLGKYVGFQDVETLWDDLGHPVMTSTKFDGNIFPSITHDNHEIITFVVLEEK.

Positions 8 and 58 each coordinate Mg(2+).

Belongs to the P-Pant transferase superfamily. AcpS family. Mg(2+) serves as cofactor.

It is found in the cytoplasm. The catalysed reaction is apo-[ACP] + CoA = holo-[ACP] + adenosine 3',5'-bisphosphate + H(+). In terms of biological role, transfers the 4'-phosphopantetheine moiety from coenzyme A to a Ser of acyl-carrier-protein. The sequence is that of Holo-[acyl-carrier-protein] synthase from Lactobacillus helveticus (strain DPC 4571).